A 60-amino-acid chain; its full sequence is Large ribosomal subunit protein uL30 (60 aa).

The protein belongs to the universal ribosomal protein uL30 family. Part of the 50S ribosomal subunit.

This Nocardioides sp. (strain ATCC BAA-499 / JS614) protein is Large ribosomal subunit protein uL30.